Here is an 870-residue protein sequence, read N- to C-terminus: Phenylalanine--tRNA ligase beta subunit (870 aa).

Positions 39–148 (AADLQKFEVA…EDAVVGEPFT (110 aa)) constitute a tRNA-binding domain. The B5 domain occupies 427–551 (PAKKTLDFPA…RIYGYDKIES (125 aa)). One can recognise an RPE1 insert domain in the interval 450-498 (LLHNEANKGEFVGNTEHSIAAYKEVREDASTGLTPKLPLEASYVKGLNI). Positions 529, 535, 538, and 539 each coordinate Mg(2+). The FDX-ACB domain occupies 776-869 (SDYQANFRDY…IEQKFQGTLR (94 aa)).

The protein belongs to the phenylalanyl-tRNA synthetase beta subunit family. Type 1 subfamily. Tetramer of two alpha and two beta subunits. Requires Mg(2+) as cofactor.

It is found in the cytoplasm. It carries out the reaction tRNA(Phe) + L-phenylalanine + ATP = L-phenylalanyl-tRNA(Phe) + AMP + diphosphate + H(+). This chain is Phenylalanine--tRNA ligase beta subunit (pheT), found in Rickettsia bellii (strain RML369-C).